Reading from the N-terminus, the 49-residue chain is Beta-toxin Rc1 (49 aa).

Disulfide bonds link Cys15-Cys31, Cys22-Cys40, and Cys26-Cys42.

It belongs to the long (4 C-C) scorpion toxin superfamily. Sodium channel inhibitor family. Beta subfamily. Expressed by the venom gland.

It is found in the secreted. Beta toxins bind voltage-independently at site-4 of sodium channels (Nav) and shift the voltage of activation toward more negative potentials thereby affecting sodium channel activation and promoting spontaneous and repetitive firing. This toxin acts on X.laevis Nav1.6/SCN8A and insect BgNav1 channels, and also displays a small but significant effect on X.laevis Nav1.4/SCN4A channels. In mice induces nociception (licking and lifting behaviors) during the first 15 minutes after injection, and increases the release of TNF-alpha in J774.1 cells. In Rhopalurus crassicauda (Scorpion), this protein is Beta-toxin Rc1.